Here is a 793-residue protein sequence, read N- to C-terminus: Nuclear cap-binding protein subunit 1 (793 aa).

The 215-residue stretch at 28 to 242 (EKKLQEVIGK…SLSAQIENLR (215 aa)) folds into the MIF4G domain.

This sequence belongs to the NCBP1 family. As to quaternary structure, component of the nuclear cap-binding complex (CBC), a heterodimer composed of ncbp-1 and ncbp-1 that interacts with m7GpppG-capped RNA.

It is found in the nucleus. Functionally, component of the cap-binding complex (CBC), which binds cotranscriptionally to the 5'-cap of pre-mRNAs and is involved in various processes such as pre-mRNA splicing and RNA-mediated gene silencing (RNAi). The CBC complex is involved in miRNA-mediated RNA interference and is required for primary microRNAs (miRNAs) processing. In the CBC complex, ncbp-1 does not bind directly capped RNAs (m7GpppG-capped RNA) but is required to stabilize the movement of the N-terminal loop of ncbp-2 and lock the CBC into a high affinity cap-binding state with the cap structure. This chain is Nuclear cap-binding protein subunit 1 (ncbp-1), found in Caenorhabditis briggsae.